Here is a 322-residue protein sequence, read N- to C-terminus: UPF0324 membrane protein BB4178 (322 aa).

Transmembrane regions (helical) follow at residues 13–35 (FIRQ…YGNF), 50–69 (FTAR…NISI), 76–98 (GLPG…TVAG), 108–127 (TAML…VLAF), 139–161 (AVAV…VIYH), 171–193 (ALGI…ASNI), 209–231 (VALL…AAGA), 241–260 (VPWF…LDIL), 273–292 (VFVL…FAQI), and 296–318 (GPRV…YGIV).

The protein belongs to the UPF0324 family.

It is found in the cell membrane. The protein is UPF0324 membrane protein BB4178 of Bordetella bronchiseptica (strain ATCC BAA-588 / NCTC 13252 / RB50) (Alcaligenes bronchisepticus).